The primary structure comprises 574 residues: Fusion glycoprotein F0 (574 aa).

The N-terminal stretch at 1–25 (MATTAMRMIISIIFISTYVTHITLC) is a signal peptide. Topologically, residues 26-524 (QNITEEFYQS…SVDVGKSTTN (499 aa)) are extracellular. Residues N27 and N70 are each glycosylated (N-linked (GlcNAc...) asparagine; by host). Disulfide bonds link C37–C439, C69–C212, C313–C343, C322–C333, C358–C367, C382–C393, and C416–C422. Residues 76–96 (VKLIKQELERYNNAVVELQSL) are a coiled coil. N120 is a glycosylation site (N-linked (GlcNAc...) asparagine; by host). Residues 137–157 (FLGFLLGIGSAIASGVAVSKV) are fusion peptide. Residues 158-209 (LHLEGEVNKIKNALLSTNKAVVSLSNGVSVLTSKVLDLKNYIDKELLPKVNN) adopt a coiled-coil conformation. Positions 481–516 (LVFPSDEFDASIAQVNAKINQSLAFIRRSDELLHSV) form a coiled coil. N500 carries N-linked (GlcNAc...) asparagine; by host glycosylation. The helical transmembrane segment at 525 to 550 (VVITTIIIVIVVVILMLIAVGLLFYS) threads the bilayer. At 551–574 (KTRSTPIMLGKDQLSGINNLSFSK) the chain is on the cytoplasmic side.

This sequence belongs to the paramyxoviruses fusion glycoprotein family. In terms of assembly, homotrimer. Heterodimer with fusion protein F2; disulfide-linked. Part of a complex composed of F1, F2 and G glycoproteins. As a heterodimer with F2, interacts with host RHOA; this interaction facilitates virus-induced syncytium formation. Homotrimer. Heterodimer with fusion protein F1; disulfide-linked. Part of a complex composed of F1, F2 and G glycoproteins. As a heterodimer with F1, interacts with host RHOA; this interaction facilitates virus-induced syncytium formation. The F glycoprotein is synthesized as a F0 inactive precursor that is heavily N-glycosylated and processed at two sites by a host furin-like protease probably in the Golgi. The cleavage site between p27 and F1 may occur after endocytosis to yield the mature F1 and F2 proteins. Both cleavages are required for membrane fusion and p27 is released from the processed protein.

The protein localises to the host Golgi apparatus membrane. It is found in the virion membrane. The protein resides in the host cell membrane. Functionally, inactive precursor that is cleaved at two sites by a furin-like protease to give rise to the mature F1 and F2 fusion glycoproteins. Its function is as follows. Class I viral fusion protein. Under the current model, the protein has at least 3 conformational states: pre-fusion native state, pre-hairpin intermediate state, and post-fusion hairpin state. During viral and plasma cell membrane fusion, the coiled coil regions assume a trimer-of-hairpins structure, positioning the fusion peptide in close proximity to the C-terminal region of the ectodomain. The formation of this structure appears to drive apposition and subsequent fusion of viral and cellular membranes leading to delivery of the nucleocapsid into the cytoplasm. This fusion is pH independent and occurs at the plasma or endosomal membrane. The trimer of F1-F2 (F protein) also facilitates the attachment and entry into the host cell. Later in infection, F protein expressed at the plasma membrane of infected cells can mediate fusion with adjacent cells to form syncytia, a cytopathic effect that could lead to tissue necrosis. Major determinant of the species specificity of RSV infection. The trimer of F1-F2 (F protein) also facilitates the attachment and entry into the host cell. Later in infection, F protein expressed at the plasma membrane of infected cells can mediate fusion with adjacent cells to form syncytia, a cytopathic effect that could lead to tissue necrosis. In Bos taurus (Bovine), this protein is Fusion glycoprotein F0 (F).